A 328-amino-acid chain; its full sequence is Nucleotide-binding protein BL0705 (328 aa).

Residues 1-35 are disordered; it reads MNQQTTNRDTGEAAATNAPANSATSTSTPDNQPTP. Low complexity predominate over residues 13–29; sequence AAATNAPANSATSTSTP. 46–53 serves as a coordination point for ATP; that stretch reads GMSGAGRS. A GTP-binding site is contributed by 101 to 104; it reads DVRS.

Belongs to the RapZ-like family.

In terms of biological role, displays ATPase and GTPase activities. This chain is Nucleotide-binding protein BL0705, found in Bifidobacterium longum (strain NCC 2705).